Here is a 180-residue protein sequence, read N- to C-terminus: 3-hydroxyanthranilate 3,4-dioxygenase (180 aa).

Arg46 provides a ligand contact to O2. Fe cation is bound by residues His50, Glu56, and His94. Substrate is bound at residue Glu56. Substrate is bound by residues Arg98 and Glu109. The Fe cation site is built by Cys124, Cys127, Cys161, and Cys164.

The protein belongs to the 3-HAO family. Homodimer. It depends on Fe(2+) as a cofactor.

The catalysed reaction is 3-hydroxyanthranilate + O2 = (2Z,4Z)-2-amino-3-carboxymuconate 6-semialdehyde. It functions in the pathway cofactor biosynthesis; NAD(+) biosynthesis; quinolinate from L-kynurenine: step 3/3. In terms of biological role, catalyzes the oxidative ring opening of 3-hydroxyanthranilate to 2-amino-3-carboxymuconate semialdehyde, which spontaneously cyclizes to quinolinate. This is 3-hydroxyanthranilate 3,4-dioxygenase from Ruegeria pomeroyi (strain ATCC 700808 / DSM 15171 / DSS-3) (Silicibacter pomeroyi).